A 158-amino-acid polypeptide reads, in one-letter code: Large ribosomal subunit protein uL11 (158 aa).

The protein belongs to the universal ribosomal protein uL11 family. In terms of assembly, part of the ribosomal stalk of the 50S ribosomal subunit. Interacts with L10 and the large rRNA to form the base of the stalk. L10 forms an elongated spine to which L12 dimers bind in a sequential fashion forming a multimeric L10(L12)X complex.

Forms part of the ribosomal stalk which helps the ribosome interact with GTP-bound translation factors. This chain is Large ribosomal subunit protein uL11, found in Methanospirillum hungatei JF-1 (strain ATCC 27890 / DSM 864 / NBRC 100397 / JF-1).